Consider the following 197-residue polypeptide: Small ribosomal subunit protein uS4c (197 aa).

The region spanning 84–143 (MRLDNIIFQLGMASTIPAARQLVCHRHILVNHRVVDIPSYRCKPRDIISIRNRPTSANAL) is the S4 RNA-binding domain.

Belongs to the universal ribosomal protein uS4 family. In terms of assembly, part of the 30S ribosomal subunit. Contacts protein S5. The interaction surface between S4 and S5 is involved in control of translational fidelity.

Its subcellular location is the plastid. It is found in the chloroplast. In terms of biological role, one of the primary rRNA binding proteins, it binds directly to 16S rRNA where it nucleates assembly of the body of the 30S subunit. With S5 and S12 plays an important role in translational accuracy. This Adiantum capillus-veneris (Maidenhair fern) protein is Small ribosomal subunit protein uS4c (rps4).